Reading from the N-terminus, the 390-residue chain is ATP phosphoribosyltransferase regulatory subunit (390 aa).

It belongs to the class-II aminoacyl-tRNA synthetase family. HisZ subfamily. In terms of assembly, heteromultimer composed of HisG and HisZ subunits.

It localises to the cytoplasm. The protein operates within amino-acid biosynthesis; L-histidine biosynthesis; L-histidine from 5-phospho-alpha-D-ribose 1-diphosphate: step 1/9. Functionally, required for the first step of histidine biosynthesis. May allow the feedback regulation of ATP phosphoribosyltransferase activity by histidine. The sequence is that of ATP phosphoribosyltransferase regulatory subunit from Nitrosomonas eutropha (strain DSM 101675 / C91 / Nm57).